We begin with the raw amino-acid sequence, 322 residues long: 26S proteasome non-ATPase regulatory subunit 7 (322 aa).

The 136-residue stretch at 9-144 (VVVHPLVLLS…TEAYISVEEV (136 aa)) folds into the MPN domain. A Glycyl lysine isopeptide (Lys-Gly) (interchain with G-Cter in ubiquitin) cross-link involves residue Lys180. Residues Lys204, Lys214, Lys314, and Lys315 each carry the N6-acetyllysine modification. The interval 281-322 (ANRDAEKKEGQEKEDSKKDRKDDKEKEKEKSDVKKEEKKEKK) is disordered.

This sequence belongs to the peptidase M67A family. As to quaternary structure, component of the 19S proteasome regulatory particle complex. The 26S proteasome consists of a 20S core particle (CP) and two 19S regulatory subunits (RP). The regulatory particle is made of a lid composed of 9 subunits including PSMD7, a base containing 6 ATPases and few additional components. Within the complex, PSMD7 interacts with subunit PSMD4 through their respective MPN domain. Interacts with TRIM5.

Component of the 26S proteasome, a multiprotein complex involved in the ATP-dependent degradation of ubiquitinated proteins. This complex plays a key role in the maintenance of protein homeostasis by removing misfolded or damaged proteins, which could impair cellular functions, and by removing proteins whose functions are no longer required. Therefore, the proteasome participates in numerous cellular processes, including cell cycle progression, apoptosis, or DNA damage repair. This chain is 26S proteasome non-ATPase regulatory subunit 7 (PSMD7), found in Bos taurus (Bovine).